The sequence spans 351 residues: Peptide chain release factor 1 (351 aa).

Position 233 is an N5-methylglutamine (Gln-233).

It belongs to the prokaryotic/mitochondrial release factor family. Post-translationally, methylated by PrmC. Methylation increases the termination efficiency of RF1.

The protein resides in the cytoplasm. Peptide chain release factor 1 directs the termination of translation in response to the peptide chain termination codons UAG and UAA. The sequence is that of Peptide chain release factor 1 from Treponema pallidum subsp. pallidum (strain SS14).